The sequence spans 208 residues: Sec-independent protein translocase protein TatB (208 aa).

The chain crosses the membrane as a helical span at residues 1-21 (MFDIGVGELTLIAVVALVVLG). Residues 188 to 208 (DAGTPAASMPSAPAKIQEKQP) are disordered.

It belongs to the TatB family. As to quaternary structure, the Tat system comprises two distinct complexes: a TatABC complex, containing multiple copies of TatA, TatB and TatC subunits, and a separate TatA complex, containing only TatA subunits. Substrates initially bind to the TatABC complex, which probably triggers association of the separate TatA complex to form the active translocon.

Its subcellular location is the cell inner membrane. Part of the twin-arginine translocation (Tat) system that transports large folded proteins containing a characteristic twin-arginine motif in their signal peptide across membranes. Together with TatC, TatB is part of a receptor directly interacting with Tat signal peptides. TatB may form an oligomeric binding site that transiently accommodates folded Tat precursor proteins before their translocation. In Xanthomonas axonopodis pv. citri (strain 306), this protein is Sec-independent protein translocase protein TatB.